Consider the following 472-residue polypeptide: Aspartyl/glutamyl-tRNA(Asn/Gln) amidotransferase subunit B (472 aa).

The protein belongs to the GatB/GatE family. GatB subfamily. Heterotrimer of A, B and C subunits.

It catalyses the reaction L-glutamyl-tRNA(Gln) + L-glutamine + ATP + H2O = L-glutaminyl-tRNA(Gln) + L-glutamate + ADP + phosphate + H(+). The catalysed reaction is L-aspartyl-tRNA(Asn) + L-glutamine + ATP + H2O = L-asparaginyl-tRNA(Asn) + L-glutamate + ADP + phosphate + 2 H(+). In terms of biological role, allows the formation of correctly charged Asn-tRNA(Asn) or Gln-tRNA(Gln) through the transamidation of misacylated Asp-tRNA(Asn) or Glu-tRNA(Gln) in organisms which lack either or both of asparaginyl-tRNA or glutaminyl-tRNA synthetases. The reaction takes place in the presence of glutamine and ATP through an activated phospho-Asp-tRNA(Asn) or phospho-Glu-tRNA(Gln). This is Aspartyl/glutamyl-tRNA(Asn/Gln) amidotransferase subunit B from Campylobacter jejuni subsp. jejuni serotype O:6 (strain 81116 / NCTC 11828).